Here is a 467-residue protein sequence, read N- to C-terminus: Asparagine--tRNA ligase (467 aa).

It belongs to the class-II aminoacyl-tRNA synthetase family. As to quaternary structure, homodimer.

It localises to the cytoplasm. The enzyme catalyses tRNA(Asn) + L-asparagine + ATP = L-asparaginyl-tRNA(Asn) + AMP + diphosphate + H(+). The chain is Asparagine--tRNA ligase from Phocaeicola vulgatus (strain ATCC 8482 / DSM 1447 / JCM 5826 / CCUG 4940 / NBRC 14291 / NCTC 11154) (Bacteroides vulgatus).